A 328-amino-acid chain; its full sequence is Biotin synthase (328 aa).

The region spanning 50–277 (FGDQVHLCCI…GKEIVICGGR (228 aa)) is the Radical SAM core domain. C67, C71, and C74 together coordinate [4Fe-4S] cluster. [2Fe-2S] cluster contacts are provided by S111, C142, and C202.

Belongs to the radical SAM superfamily. Biotin synthase family. As to quaternary structure, homodimer. [4Fe-4S] cluster serves as cofactor. It depends on [2Fe-2S] cluster as a cofactor.

The enzyme catalyses (4R,5S)-dethiobiotin + (sulfur carrier)-SH + 2 reduced [2Fe-2S]-[ferredoxin] + 2 S-adenosyl-L-methionine = (sulfur carrier)-H + biotin + 2 5'-deoxyadenosine + 2 L-methionine + 2 oxidized [2Fe-2S]-[ferredoxin]. It functions in the pathway cofactor biosynthesis; biotin biosynthesis; biotin from 7,8-diaminononanoate: step 2/2. Its function is as follows. Catalyzes the conversion of dethiobiotin (DTB) to biotin by the insertion of a sulfur atom into dethiobiotin via a radical-based mechanism. In Desulfatibacillum aliphaticivorans, this protein is Biotin synthase.